Consider the following 227-residue polypeptide: Cytochrome c oxidase subunit 2 (227 aa).

The Mitochondrial intermembrane portion of the chain corresponds to M1 to S14. Residues P15–M45 traverse the membrane as a helical segment. Topologically, residues L46–Q59 are mitochondrial matrix. A helical transmembrane segment spans residues E60 to M87. Topologically, residues D88 to I227 are mitochondrial intermembrane. Cu cation-binding residues include H161, C196, E198, C200, H204, and M207. Position 198 (E198) interacts with Mg(2+).

The protein belongs to the cytochrome c oxidase subunit 2 family. As to quaternary structure, component of the cytochrome c oxidase (complex IV, CIV), a multisubunit enzyme composed of 14 subunits. The complex is composed of a catalytic core of 3 subunits MT-CO1, MT-CO2 and MT-CO3, encoded in the mitochondrial DNA, and 11 supernumerary subunits COX4I, COX5A, COX5B, COX6A, COX6B, COX6C, COX7A, COX7B, COX7C, COX8 and NDUFA4, which are encoded in the nuclear genome. The complex exists as a monomer or a dimer and forms supercomplexes (SCs) in the inner mitochondrial membrane with NADH-ubiquinone oxidoreductase (complex I, CI) and ubiquinol-cytochrome c oxidoreductase (cytochrome b-c1 complex, complex III, CIII), resulting in different assemblies (supercomplex SCI(1)III(2)IV(1) and megacomplex MCI(2)III(2)IV(2)). Found in a complex with TMEM177, COA6, COX18, COX20, SCO1 and SCO2. Interacts with TMEM177 in a COX20-dependent manner. Interacts with COX20. Interacts with COX16. Cu cation is required as a cofactor.

It localises to the mitochondrion inner membrane. It carries out the reaction 4 Fe(II)-[cytochrome c] + O2 + 8 H(+)(in) = 4 Fe(III)-[cytochrome c] + 2 H2O + 4 H(+)(out). Functionally, component of the cytochrome c oxidase, the last enzyme in the mitochondrial electron transport chain which drives oxidative phosphorylation. The respiratory chain contains 3 multisubunit complexes succinate dehydrogenase (complex II, CII), ubiquinol-cytochrome c oxidoreductase (cytochrome b-c1 complex, complex III, CIII) and cytochrome c oxidase (complex IV, CIV), that cooperate to transfer electrons derived from NADH and succinate to molecular oxygen, creating an electrochemical gradient over the inner membrane that drives transmembrane transport and the ATP synthase. Cytochrome c oxidase is the component of the respiratory chain that catalyzes the reduction of oxygen to water. Electrons originating from reduced cytochrome c in the intermembrane space (IMS) are transferred via the dinuclear copper A center (CU(A)) of subunit 2 and heme A of subunit 1 to the active site in subunit 1, a binuclear center (BNC) formed by heme A3 and copper B (CU(B)). The BNC reduces molecular oxygen to 2 water molecules using 4 electrons from cytochrome c in the IMS and 4 protons from the mitochondrial matrix. The polypeptide is Cytochrome c oxidase subunit 2 (MT-CO2) (Leggadina forresti (Forrest's mouse)).